We begin with the raw amino-acid sequence, 266 residues long: Glutamate racemase (266 aa).

Residues 7-8 (DS) and 39-40 (YG) contribute to the substrate site. The Proton donor/acceptor role is filled by Cys70. 71-72 (NT) is a binding site for substrate. Cys186 acts as the Proton donor/acceptor in catalysis. 187–188 (TH) provides a ligand contact to substrate.

This sequence belongs to the aspartate/glutamate racemases family.

It carries out the reaction L-glutamate = D-glutamate. The protein operates within cell wall biogenesis; peptidoglycan biosynthesis. In terms of biological role, provides the (R)-glutamate required for cell wall biosynthesis. This is Glutamate racemase from Campylobacter curvus (strain 525.92).